A 209-amino-acid chain; its full sequence is Ribosomal RNA large subunit methyltransferase E (209 aa).

Gly-63, Trp-65, Asp-83, Asp-99, and Asp-124 together coordinate S-adenosyl-L-methionine. Lys-164 (proton acceptor) is an active-site residue.

The protein belongs to the class I-like SAM-binding methyltransferase superfamily. RNA methyltransferase RlmE family.

It is found in the cytoplasm. It carries out the reaction uridine(2552) in 23S rRNA + S-adenosyl-L-methionine = 2'-O-methyluridine(2552) in 23S rRNA + S-adenosyl-L-homocysteine + H(+). Specifically methylates the uridine in position 2552 of 23S rRNA at the 2'-O position of the ribose in the fully assembled 50S ribosomal subunit. The chain is Ribosomal RNA large subunit methyltransferase E from Shewanella woodyi (strain ATCC 51908 / MS32).